Reading from the N-terminus, the 231-residue chain is Histone H1 (231 aa).

Residues 1 to 17 show a composition bias toward low complexity; sequence MSDPAIEVAPVPVASPA. Disordered stretches follow at residues 1–44 and 124–231; these read MSDP…PVSD and TKKV…AKKA. One can recognise an H15 domain in the interval 38–112; the sequence is THPPVSDMIV…GASGSFKLPA (75 aa). Basic residues-rich tracts occupy residues 145-171, 178-213, and 221-231; these read KVKK…KTTK, PTKK…KAKK, and KAAKKPSAKKA.

Belongs to the histone H1/H5 family.

The protein resides in the nucleus. Its subcellular location is the chromosome. Its function is as follows. Histones H1 are necessary for the condensation of nucleosome chains into higher-order structures. The polypeptide is Histone H1 (Chironomus thummi thummi (Midge)).